A 204-amino-acid chain; its full sequence is Per os infectivity factor 3 (204 aa).

As to quaternary structure, forms the PIF complex together with PIF1 and PIF2. The complex also interacts with per os infectivity factor PIF0.

In terms of biological role, per os factor that plays a role in the initiation of host midgut infection. Unlike PIF1 and PIF2, PIF3 is not involved in specific binding of occluded virions (ODV) to the host midgut target cells. In Lepidoptera (butterflies and moths), this protein is Per os infectivity factor 3 (AC115).